Reading from the N-terminus, the 210-residue chain is Orotate phosphoribosyltransferase (210 aa).

5-phospho-alpha-D-ribose 1-diphosphate contacts are provided by residues Arg-94, Lys-98, His-100, and 120 to 128; that span reads EDLISTGGS. Ser-124 serves as a coordination point for orotate.

It belongs to the purine/pyrimidine phosphoribosyltransferase family. PyrE subfamily. Homodimer. It depends on Mg(2+) as a cofactor.

It carries out the reaction orotidine 5'-phosphate + diphosphate = orotate + 5-phospho-alpha-D-ribose 1-diphosphate. The protein operates within pyrimidine metabolism; UMP biosynthesis via de novo pathway; UMP from orotate: step 1/2. Functionally, catalyzes the transfer of a ribosyl phosphate group from 5-phosphoribose 1-diphosphate to orotate, leading to the formation of orotidine monophosphate (OMP). This Bacillus cereus (strain ATCC 10987 / NRS 248) protein is Orotate phosphoribosyltransferase.